Consider the following 296-residue polypeptide: GTP-binding protein GEM (296 aa).

Disordered stretches follow at residues Met1–Gln20 and Pro37–Ser68. The span at Ser57–Ser68 shows a compositional bias: low complexity. Residues Gly82–Ser89 and Asn191–Asp194 each bind GTP. The segment at Ala266–Leu285 is calmodulin-binding.

Belongs to the small GTPase superfamily. RGK family. As to quaternary structure, interacts with calmodulin in a Ca(2+)-dependent manner. Binds ROCK1. Phosphorylated on tyrosine residues.

It localises to the cell membrane. Could be a regulatory protein, possibly participating in receptor-mediated signal transduction at the plasma membrane. Has guanine nucleotide-binding activity but undetectable intrinsic GTPase activity. This Pongo abelii (Sumatran orangutan) protein is GTP-binding protein GEM (GEM).